Here is a 432-residue protein sequence, read N- to C-terminus: Trigger factor (432 aa).

The PPIase FKBP-type domain occupies 161–246; sequence EDRVTIDFTG…LKKVEERELP (86 aa).

Belongs to the FKBP-type PPIase family. Tig subfamily. In terms of assembly, homodimer and monomer. In vivo most of the ribosomes are in complex with monomeric TF. Uncomplexed TF, however, is in a monomer-dimer equilibrium with approximately two thirds of TF existing in a dimeric state.

The protein resides in the cytoplasm. It carries out the reaction [protein]-peptidylproline (omega=180) = [protein]-peptidylproline (omega=0). Involved in protein export. Acts as a chaperone by maintaining the newly synthesized protein in an open conformation. Functions as a peptidyl-prolyl cis-trans isomerase. The protein is Trigger factor of Escherichia fergusonii (strain ATCC 35469 / DSM 13698 / CCUG 18766 / IAM 14443 / JCM 21226 / LMG 7866 / NBRC 102419 / NCTC 12128 / CDC 0568-73).